The following is a 450-amino-acid chain: Phosphoglucosamine mutase (450 aa).

Ser-107 acts as the Phosphoserine intermediate in catalysis. Ser-107, Asp-246, Asp-248, and Asp-250 together coordinate Mg(2+). At Ser-107 the chain carries Phosphoserine.

This sequence belongs to the phosphohexose mutase family. It depends on Mg(2+) as a cofactor. In terms of processing, activated by phosphorylation.

The enzyme catalyses alpha-D-glucosamine 1-phosphate = D-glucosamine 6-phosphate. Functionally, catalyzes the conversion of glucosamine-6-phosphate to glucosamine-1-phosphate. The polypeptide is Phosphoglucosamine mutase (Dechloromonas aromatica (strain RCB)).